We begin with the raw amino-acid sequence, 338 residues long: UDP-N-acetylglucosamine--N-acetylmuramyl-(pentapeptide) pyrophosphoryl-undecaprenol N-acetylglucosamine transferase (338 aa).

UDP-N-acetyl-alpha-D-glucosamine is bound by residues 10-12, Asn122, Ser177, and Gln275; that span reads TGG.

This sequence belongs to the glycosyltransferase 28 family. MurG subfamily.

The protein localises to the cell inner membrane. It catalyses the reaction di-trans,octa-cis-undecaprenyl diphospho-N-acetyl-alpha-D-muramoyl-L-alanyl-D-glutamyl-meso-2,6-diaminopimeloyl-D-alanyl-D-alanine + UDP-N-acetyl-alpha-D-glucosamine = di-trans,octa-cis-undecaprenyl diphospho-[N-acetyl-alpha-D-glucosaminyl-(1-&gt;4)]-N-acetyl-alpha-D-muramoyl-L-alanyl-D-glutamyl-meso-2,6-diaminopimeloyl-D-alanyl-D-alanine + UDP + H(+). The protein operates within cell wall biogenesis; peptidoglycan biosynthesis. Functionally, cell wall formation. Catalyzes the transfer of a GlcNAc subunit on undecaprenyl-pyrophosphoryl-MurNAc-pentapeptide (lipid intermediate I) to form undecaprenyl-pyrophosphoryl-MurNAc-(pentapeptide)GlcNAc (lipid intermediate II). This is UDP-N-acetylglucosamine--N-acetylmuramyl-(pentapeptide) pyrophosphoryl-undecaprenol N-acetylglucosamine transferase from Sulfurovum sp. (strain NBC37-1).